Reading from the N-terminus, the 66-residue chain is Protein translocase subunit SecE (66 aa).

The chain crosses the membrane as a helical span at residues 41–61; the sequence is LAVMFIVGFVGFVIYILMEIL.

This sequence belongs to the SecE/SEC61-gamma family. In terms of assembly, component of the Sec protein translocase complex. Heterotrimer consisting of SecY (alpha), SecG (beta) and SecE (gamma) subunits. The heterotrimers can form oligomers, although 1 heterotrimer is thought to be able to translocate proteins. Interacts with the ribosome. May interact with SecDF, and other proteins may be involved.

The protein localises to the cell membrane. In terms of biological role, essential subunit of the Sec protein translocation channel SecYEG. Clamps together the 2 halves of SecY. May contact the channel plug during translocation. This Archaeoglobus fulgidus (strain ATCC 49558 / DSM 4304 / JCM 9628 / NBRC 100126 / VC-16) protein is Protein translocase subunit SecE.